The following is a 140-amino-acid chain: Large ribosomal subunit protein uL16 (140 aa).

It belongs to the universal ribosomal protein uL16 family. In terms of assembly, part of the 50S ribosomal subunit.

In terms of biological role, binds 23S rRNA and is also seen to make contacts with the A and possibly P site tRNAs. This Onion yellows phytoplasma (strain OY-M) protein is Large ribosomal subunit protein uL16.